Here is a 182-residue protein sequence, read N- to C-terminus: NADH-quinone oxidoreductase subunit C 2 (182 aa).

The interval 153-182 (YKDKLNPFGAEGPPPTQPDLATNDIPQGGR) is disordered.

Belongs to the complex I 30 kDa subunit family. NDH-1 is composed of 14 different subunits. Subunits NuoB, C, D, E, F, and G constitute the peripheral sector of the complex.

The protein localises to the cell inner membrane. It catalyses the reaction a quinone + NADH + 5 H(+)(in) = a quinol + NAD(+) + 4 H(+)(out). Its function is as follows. NDH-1 shuttles electrons from NADH, via FMN and iron-sulfur (Fe-S) centers, to quinones in the respiratory chain. The immediate electron acceptor for the enzyme in this species is believed to be ubiquinone. Couples the redox reaction to proton translocation (for every two electrons transferred, four hydrogen ions are translocated across the cytoplasmic membrane), and thus conserves the redox energy in a proton gradient. The chain is NADH-quinone oxidoreductase subunit C 2 from Rhizobium meliloti (strain 1021) (Ensifer meliloti).